Consider the following 189-residue polypeptide: Elongation factor P 2 (189 aa).

The protein belongs to the elongation factor P family.

The protein localises to the cytoplasm. It participates in protein biosynthesis; polypeptide chain elongation. Functionally, involved in peptide bond synthesis. Stimulates efficient translation and peptide-bond synthesis on native or reconstituted 70S ribosomes in vitro. Probably functions indirectly by altering the affinity of the ribosome for aminoacyl-tRNA, thus increasing their reactivity as acceptors for peptidyl transferase. The sequence is that of Elongation factor P 2 from Lactobacillus acidophilus (strain ATCC 700396 / NCK56 / N2 / NCFM).